Here is a 314-residue protein sequence, read N- to C-terminus: Methionyl-tRNA formyltransferase (314 aa).

110-113 (SLLP) is a binding site for (6S)-5,6,7,8-tetrahydrofolate.

This sequence belongs to the Fmt family.

The enzyme catalyses L-methionyl-tRNA(fMet) + (6R)-10-formyltetrahydrofolate = N-formyl-L-methionyl-tRNA(fMet) + (6S)-5,6,7,8-tetrahydrofolate + H(+). Its function is as follows. Attaches a formyl group to the free amino group of methionyl-tRNA(fMet). The formyl group appears to play a dual role in the initiator identity of N-formylmethionyl-tRNA by promoting its recognition by IF2 and preventing the misappropriation of this tRNA by the elongation apparatus. The chain is Methionyl-tRNA formyltransferase from Bacillus mycoides (strain KBAB4) (Bacillus weihenstephanensis).